Reading from the N-terminus, the 495-residue chain is Ectonucleoside triphosphate diphosphohydrolase 2 (495 aa).

Topologically, residues 1 to 4 (MAGK) are cytoplasmic. A helical membrane pass occupies residues 5 to 25 (LVSLVPPLLLAAAGLTGLLLL). Residues 26–462 (CVPTQDVREP…PGLRKGTHFS (437 aa)) lie on the Extracellular side of the membrane. Asparagine 64 is a glycosylation site (N-linked (GlcNAc...) asparagine). The cysteines at positions 75 and 99 are disulfide-linked. Asparagine 129 is a glycosylation site (N-linked (GlcNAc...) asparagine). The active-site Proton acceptor is glutamate 165. 204 to 208 (GASTQ) is a binding site for ATP. Intrachain disulfides connect cysteine 242-cysteine 284 and cysteine 265-cysteine 310. Asparagine 294, asparagine 306, and asparagine 319 each carry an N-linked (GlcNAc...) asparagine glycan. 2 disulfide bridges follow: cysteine 323–cysteine 328 and cysteine 377–cysteine 399. N-linked (GlcNAc...) asparagine glycans are attached at residues asparagine 378 and asparagine 443. Residues 463-483 (SWVALLLLFTVLILAALVLLL) form a helical membrane-spanning segment. The Cytoplasmic segment spans residues 484 to 495 (RQVRSAKSPGAL).

It belongs to the GDA1/CD39 NTPase family. Requires Ca(2+) as cofactor. It depends on Mg(2+) as a cofactor. As to expression, expressed in brain, heart, vas deferens, kidney, skeletal muscle, thymus, lung and spleen. Weak expression in liver.

The protein resides in the cell membrane. In the nervous system, could hydrolyze ATP and other nucleotides to regulate purinergic neurotransmission. Hydrolyzes ADP only to a marginal extent. The chain is Ectonucleoside triphosphate diphosphohydrolase 2 (Entpd2) from Rattus norvegicus (Rat).